The sequence spans 120 residues: Holo-[acyl-carrier-protein] synthase (120 aa).

Residues D8 and E58 each contribute to the Mg(2+) site.

The protein belongs to the P-Pant transferase superfamily. AcpS family. It depends on Mg(2+) as a cofactor.

The protein localises to the cytoplasm. It carries out the reaction apo-[ACP] + CoA = holo-[ACP] + adenosine 3',5'-bisphosphate + H(+). Its function is as follows. Transfers the 4'-phosphopantetheine moiety from coenzyme A to a Ser of acyl-carrier-protein. The sequence is that of Holo-[acyl-carrier-protein] synthase from Anoxybacillus flavithermus (strain DSM 21510 / WK1).